A 586-amino-acid polypeptide reads, in one-letter code: Cytosolic Fe-S cluster assembly factor NAR1 (586 aa).

Positions 20, 73, 76, 79, 220, 275, 462, and 466 each coordinate [4Fe-4S] cluster.

It belongs to the NARF family.

Component of the cytosolic Fe/S protein assembly machinery. Required for maturation of extramitochondrial Fe/S proteins. May play a role in the transfer of pre-assembled Fe/S clusters to target apoproteins. The chain is Cytosolic Fe-S cluster assembly factor NAR1 (NAR1) from Chaetomium globosum (strain ATCC 6205 / CBS 148.51 / DSM 1962 / NBRC 6347 / NRRL 1970) (Soil fungus).